A 389-amino-acid polypeptide reads, in one-letter code: Chaperone protein DnaJ (389 aa).

One can recognise a J domain in the interval D6–G70. The CR-type zinc finger occupies G131–R213. Zn(2+)-binding residues include C144, C147, C161, C164, C187, C190, C201, and C204. CXXCXGXG motif repeat units follow at residues C144–G151, C161–G168, C187–G194, and C201–G208. Residues S145–T167 are disordered. Residues L351–S389 are disordered. Over residues K355 to S389 the composition is skewed to basic and acidic residues.

The protein belongs to the DnaJ family. As to quaternary structure, homodimer. The cofactor is Zn(2+).

Its subcellular location is the cytoplasm. Its function is as follows. Participates actively in the response to hyperosmotic and heat shock by preventing the aggregation of stress-denatured proteins and by disaggregating proteins, also in an autonomous, DnaK-independent fashion. Unfolded proteins bind initially to DnaJ; upon interaction with the DnaJ-bound protein, DnaK hydrolyzes its bound ATP, resulting in the formation of a stable complex. GrpE releases ADP from DnaK; ATP binding to DnaK triggers the release of the substrate protein, thus completing the reaction cycle. Several rounds of ATP-dependent interactions between DnaJ, DnaK and GrpE are required for fully efficient folding. Also involved, together with DnaK and GrpE, in the DNA replication of plasmids through activation of initiation proteins. This is Chaperone protein DnaJ from Methanosarcina mazei (strain ATCC BAA-159 / DSM 3647 / Goe1 / Go1 / JCM 11833 / OCM 88) (Methanosarcina frisia).